The sequence spans 769 residues: Sensor histidine kinase ComP (769 aa).

Topologically, residues 1 to 9 (MKNLIKKFT) are cytoplasmic. The helical transmembrane segment at 10–33 (IAVIVLSILYISYTTYISMNGIII) threads the bilayer. The Extracellular segment spans residues 34 to 113 (GTKIHKNDKS…DFDLVTLNRP (80 aa)). Residues 114–134 (YSFFLFVLPLFFYFLSIICIF) traverse the membrane as a helical segment. Topologically, residues 135–144 (YILKVNKKRR) are cytoplasmic. The chain crosses the membrane as a helical span at residues 145 to 167 (SFAAYILILLLLDISIAYISAGG). The Extracellular segment spans residues 168 to 235 (PFRGHIINRY…QDYLQVDIDF (68 aa)). Residues 236–257 (LATLNLVSFATLTLFSFSAIYL) form a helical membrane-spanning segment. The Cytoplasmic segment spans residues 258 to 272 (HLNKYKYAEHSFILK). Residues 273–295 (LLILTNTLSFAPFLIFFVLPIIF) form a helical membrane-spanning segment. The Extracellular segment spans residues 296–299 (TGNY). The chain crosses the membrane as a helical span at residues 300–323 (IFPALASASLLVLIPFGLVYQFVA). The Cytoplasmic portion of the chain corresponds to 324–337 (NKMFDIEFILGRMR). A helical transmembrane segment spans residues 338-357 (YYALLAMIPTLLIVGALVLF). The Extracellular segment spans residues 358–361 (DVMD). A helical membrane pass occupies residues 362-383 (IQMNPVRQTVFFFVVMFAVFYF). The Cytoplasmic portion of the chain corresponds to 384–769 (KEVMDFKFRL…GFKADIEIEL (386 aa)). In terms of domain architecture, Histidine kinase spans 571 to 769 (LARDLHDSVL…GFKADIEIEL (199 aa)). H576 is subject to Phosphohistidine; by autocatalysis.

In terms of processing, autophosphorylates on a histidine and transfers the phosphate group onto an aspartate in ComA, thus activating it.

It is found in the cell membrane. It carries out the reaction ATP + protein L-histidine = ADP + protein N-phospho-L-histidine.. Functionally, sensor in the two-component regulatory system ComP/ComA involved in a major quorum response pathway that regulates the development of genetic competence. Plays a role in sporulation, at least partly interchangeable with that of SpoIIJ. Probably activates ComA by phosphorylation. The sequence is that of Sensor histidine kinase ComP (comP) from Bacillus subtilis (strain 168).